We begin with the raw amino-acid sequence, 147 residues long: HTH-type transcriptional regulator MntR (147 aa).

The 63-residue stretch at 1–63 folds into the HTH dtxR-type domain; it reads MPTPSMEDYI…YEKYRGFVLT (63 aa). The Mn(2+) site is built by Asp8, Glu11, His77, Glu99, Glu102, and His103.

This sequence belongs to the DtxR/MntR family. Homodimer.

Its subcellular location is the cytoplasm. Its activity is regulated as follows. DNA binding is strongly activated by Mn(2+). Functionally, central regulator of manganese homeostasis. This is HTH-type transcriptional regulator MntR from Oceanobacillus iheyensis (strain DSM 14371 / CIP 107618 / JCM 11309 / KCTC 3954 / HTE831).